Consider the following 365-residue polypeptide: tRNA/tmRNA (uracil-C(5))-methyltransferase (365 aa).

S-adenosyl-L-methionine-binding residues include Gln196, Tyr224, Asn229, Glu245, and Asp298. The active-site Nucleophile is the Cys323. Residue Glu357 is the Proton acceptor of the active site.

It belongs to the class I-like SAM-binding methyltransferase superfamily. RNA M5U methyltransferase family. TrmA subfamily.

The catalysed reaction is uridine(54) in tRNA + S-adenosyl-L-methionine = 5-methyluridine(54) in tRNA + S-adenosyl-L-homocysteine + H(+). It catalyses the reaction uridine(341) in tmRNA + S-adenosyl-L-methionine = 5-methyluridine(341) in tmRNA + S-adenosyl-L-homocysteine + H(+). Its function is as follows. Dual-specificity methyltransferase that catalyzes the formation of 5-methyluridine at position 54 (m5U54) in all tRNAs, and that of position 341 (m5U341) in tmRNA (transfer-mRNA). The chain is tRNA/tmRNA (uracil-C(5))-methyltransferase from Nautilia profundicola (strain ATCC BAA-1463 / DSM 18972 / AmH).